The chain runs to 603 residues: Glutathione-regulated potassium-efflux system protein KefB (603 aa).

A run of 13 helical transmembrane segments spans residues 5-25, 29-49, 55-75, 87-107, 115-135, 152-172, 180-202, 207-227, 230-250, 268-288, 291-311, 326-346, and 356-376; these read ALLT…PIAA, IGAV…GLGF, AILH…GLEL, IFGV…GALY, SALI…LQLM, VLLF…ILAG, WERI…YLVR, FIAA…LVLG, LFME…GILL, GLLL…GILY, IVKI…VLYF, FAGV…AAAS, and PLLL…MQLI. An RCK N-terminal domain is found at 400 to 521; sequence EPQVIVVGFG…VRHFSRETFS (122 aa).

Belongs to the monovalent cation:proton antiporter 2 (CPA2) transporter (TC 2.A.37) family. KefB subfamily. In terms of assembly, interacts with the regulatory subunit KefG.

The protein resides in the cell inner membrane. Its function is as follows. Pore-forming subunit of a potassium efflux system that confers protection against electrophiles. Catalyzes K(+)/H(+) antiport. The protein is Glutathione-regulated potassium-efflux system protein KefB of Pectobacterium carotovorum subsp. carotovorum (strain PC1).